We begin with the raw amino-acid sequence, 291 residues long: Acetyl-coenzyme A carboxylase carboxyl transferase subunit beta (291 aa).

The tract at residues 1 to 23 (MSWLSKLMPSGIRTDNTPSKKRS) is disordered. The 264-residue stretch at 28 to 291 (LWEKCSNCGS…LGRQPAPEVA (264 aa)) folds into the CoA carboxyltransferase N-terminal domain. The Zn(2+) site is built by C32, C35, C51, and C54. A C4-type zinc finger spans residues 32–54 (CSNCGSALYRPELEENLEVCPKC).

It belongs to the AccD/PCCB family. In terms of assembly, acetyl-CoA carboxylase is a heterohexamer composed of biotin carboxyl carrier protein (AccB), biotin carboxylase (AccC) and two subunits each of ACCase subunit alpha (AccA) and ACCase subunit beta (AccD). It depends on Zn(2+) as a cofactor.

It is found in the cytoplasm. The enzyme catalyses N(6)-carboxybiotinyl-L-lysyl-[protein] + acetyl-CoA = N(6)-biotinyl-L-lysyl-[protein] + malonyl-CoA. It participates in lipid metabolism; malonyl-CoA biosynthesis; malonyl-CoA from acetyl-CoA: step 1/1. Its function is as follows. Component of the acetyl coenzyme A carboxylase (ACC) complex. Biotin carboxylase (BC) catalyzes the carboxylation of biotin on its carrier protein (BCCP) and then the CO(2) group is transferred by the transcarboxylase to acetyl-CoA to form malonyl-CoA. The protein is Acetyl-coenzyme A carboxylase carboxyl transferase subunit beta of Stenotrophomonas maltophilia (strain R551-3).